A 368-amino-acid chain; its full sequence is Phospho-N-acetylmuramoyl-pentapeptide-transferase (368 aa).

9 helical membrane passes run 30–50 (AAAI…IAYL), 72–92 (LPTM…FLWA), 99–119 (VWLV…DDYL), 135–155 (LIGQ…DPSM), 170–190 (LTIN…TAIS), 201–221 (GLAA…AYLA), 238–258 (GGEV…FLWF), 265–286 (IIMG…ALLI), and 345–365 (KIVI…LMTL).

The protein belongs to the glycosyltransferase 4 family. MraY subfamily. Mg(2+) serves as cofactor.

Its subcellular location is the cell inner membrane. The catalysed reaction is UDP-N-acetyl-alpha-D-muramoyl-L-alanyl-gamma-D-glutamyl-meso-2,6-diaminopimeloyl-D-alanyl-D-alanine + di-trans,octa-cis-undecaprenyl phosphate = di-trans,octa-cis-undecaprenyl diphospho-N-acetyl-alpha-D-muramoyl-L-alanyl-D-glutamyl-meso-2,6-diaminopimeloyl-D-alanyl-D-alanine + UMP. It participates in cell wall biogenesis; peptidoglycan biosynthesis. In terms of biological role, catalyzes the initial step of the lipid cycle reactions in the biosynthesis of the cell wall peptidoglycan: transfers peptidoglycan precursor phospho-MurNAc-pentapeptide from UDP-MurNAc-pentapeptide onto the lipid carrier undecaprenyl phosphate, yielding undecaprenyl-pyrophosphoryl-MurNAc-pentapeptide, known as lipid I. The chain is Phospho-N-acetylmuramoyl-pentapeptide-transferase from Chlorobium chlorochromatii (strain CaD3).